The primary structure comprises 113 residues: MAYLVAVTACVSGVAHTYMAAERLEKLCLLEKWGVSIETQGALGTENRLADEDIRRADVALLITDIELAGAERFEHCRYVQCSIYAFLREPQRVMSAVRKVLSAPQQTHLILE.

The 100-residue stretch at 1–100 (MAYLVAVTAC…PQRVMSAVRK (100 aa)) folds into the PTS EIIB type-2 domain. Residue cysteine 10 is the Phosphocysteine intermediate of the active site. A Phosphocysteine; by EIIA modification is found at cysteine 10.

The protein resides in the cytoplasm. It carries out the reaction D-fructose(out) + N(pros)-phospho-L-histidyl-[protein] = D-fructose 1-phosphate(in) + L-histidyl-[protein]. Functionally, the phosphoenolpyruvate-dependent sugar phosphotransferase system (sugar PTS), a major carbohydrate active transport system, catalyzes the phosphorylation of incoming sugar substrates concomitantly with their translocation across the cell membrane. This chain is PTS system fructose-like EIIB component 3 (frwD), found in Escherichia coli (strain K12).